The following is a 370-amino-acid chain: 4-hydroxy-3-methylbut-2-en-1-yl diphosphate synthase (flavodoxin) (370 aa).

[4Fe-4S] cluster is bound by residues cysteine 265, cysteine 268, cysteine 300, and glutamate 307.

This sequence belongs to the IspG family. [4Fe-4S] cluster serves as cofactor.

It catalyses the reaction (2E)-4-hydroxy-3-methylbut-2-enyl diphosphate + oxidized [flavodoxin] + H2O + 2 H(+) = 2-C-methyl-D-erythritol 2,4-cyclic diphosphate + reduced [flavodoxin]. The protein operates within isoprenoid biosynthesis; isopentenyl diphosphate biosynthesis via DXP pathway; isopentenyl diphosphate from 1-deoxy-D-xylulose 5-phosphate: step 5/6. In terms of biological role, converts 2C-methyl-D-erythritol 2,4-cyclodiphosphate (ME-2,4cPP) into 1-hydroxy-2-methyl-2-(E)-butenyl 4-diphosphate. The protein is 4-hydroxy-3-methylbut-2-en-1-yl diphosphate synthase (flavodoxin) of Symbiobacterium thermophilum (strain DSM 24528 / JCM 14929 / IAM 14863 / T).